Reading from the N-terminus, the 430-residue chain is MLDPYLLRHDIKIVAKKLASKNFLLAVDKVNQQEALRKQLQIKKEHLQFIRKSKSRIVNLAKANGENITILCQEINQINEQLKQTKSELSSLKQLINDYMLLLPNIPADDVPYGSDKKDNIEIKRWGEPRKYNFPIKDHVNLGYITGNIDFTAGVKLAGTRFVVIRGQIARLYRALSQFMLDLHTQQHGYEEYYLPYLVNRTSLYGTGHLPKFYEDLFHIQSINKENISNIYTLIPTAEVPLINLLRDKIFDENILPLKMTANTPCFRAEAGSYGRDTHGLIRMHQFDKVEMVQAIKPEHSMIALEEMTKHAEKVLQLLNLHYRKVLLCTGDTGFASSKTYDLEVWLPSQNIYCEVSSCSNTSDFQTRRVLARYRNKKDKQLRFLHTINGSGLAIGRTLIAILENYQLADGRIEVPKSLRSYMQGLTILG.

L-serine is bound at residue 237–239; sequence TAE. ATP is bound at residue 268 to 270; it reads RAE. Glu-291 contacts L-serine. 355–358 contacts ATP; sequence EVSS. Ser-391 contributes to the L-serine binding site.

This sequence belongs to the class-II aminoacyl-tRNA synthetase family. Type-1 seryl-tRNA synthetase subfamily. Homodimer. The tRNA molecule binds across the dimer.

It is found in the cytoplasm. It carries out the reaction tRNA(Ser) + L-serine + ATP = L-seryl-tRNA(Ser) + AMP + diphosphate + H(+). It catalyses the reaction tRNA(Sec) + L-serine + ATP = L-seryl-tRNA(Sec) + AMP + diphosphate + H(+). Its pathway is aminoacyl-tRNA biosynthesis; selenocysteinyl-tRNA(Sec) biosynthesis; L-seryl-tRNA(Sec) from L-serine and tRNA(Sec): step 1/1. Functionally, catalyzes the attachment of serine to tRNA(Ser). Is also able to aminoacylate tRNA(Sec) with serine, to form the misacylated tRNA L-seryl-tRNA(Sec), which will be further converted into selenocysteinyl-tRNA(Sec). The sequence is that of Serine--tRNA ligase from Baumannia cicadellinicola subsp. Homalodisca coagulata.